A 279-amino-acid chain; its full sequence is Bis(5'-nucleosyl)-tetraphosphatase, symmetrical (279 aa).

It belongs to the Ap4A hydrolase family.

The enzyme catalyses P(1),P(4)-bis(5'-adenosyl) tetraphosphate + H2O = 2 ADP + 2 H(+). Hydrolyzes diadenosine 5',5'''-P1,P4-tetraphosphate to yield ADP. This is Bis(5'-nucleosyl)-tetraphosphatase, symmetrical from Edwardsiella ictaluri (strain 93-146).